A 483-amino-acid polypeptide reads, in one-letter code: Dihydrolipoyllysine-residue acetyltransferase component of pyruvate dehydrogenase complex, mitochondrial (483 aa).

The N-terminal 28 residues, 1–28 (MLSANMLRRMHHGVAVTRMLLVSNGKVQ), are a transit peptide targeting the mitochondrion. The region spanning 53–129 (HTVINMPALS…PVGKPLAVTV (77 aa)) is the Lipoyl-binding domain. Lys94 carries the post-translational modification N6-lipoyllysine. Disordered stretches follow at residues 143–187 (IEDS…DRVF) and 234–254 (EAAAKATTPAASAADAAAPGD). Positions 146–160 (SSAKEPSAKSGEEKS) are enriched in basic and acidic residues. The span at 161 to 178 (APSSEKQSKETSSPSNVS) shows a compositional bias: polar residues. Residues 187–224 (FASPLARKLAEEKDLDLSQIRGSGPNGRIIKVDIENFK) form the Peripheral subunit-binding (PSBD) domain. Low complexity predominate over residues 235–252 (AAAKATTPAASAADAAAP). Catalysis depends on residues His456 and Asp460.

It belongs to the 2-oxoacid dehydrogenase family. The cofactor is (R)-lipoate.

The protein resides in the mitochondrion matrix. The catalysed reaction is N(6)-[(R)-dihydrolipoyl]-L-lysyl-[protein] + acetyl-CoA = N(6)-[(R)-S(8)-acetyldihydrolipoyl]-L-lysyl-[protein] + CoA. The pyruvate dehydrogenase complex catalyzes the overall conversion of pyruvate to acetyl-CoA and CO(2). It contains multiple copies of three enzymatic components: pyruvate dehydrogenase (E1), dihydrolipoamide acetyltransferase (E2) and lipoamide dehydrogenase (E3). In Schizosaccharomyces pombe (strain 972 / ATCC 24843) (Fission yeast), this protein is Dihydrolipoyllysine-residue acetyltransferase component of pyruvate dehydrogenase complex, mitochondrial.